A 309-amino-acid polypeptide reads, in one-letter code: Homoserine O-succinyltransferase (309 aa).

Residue Cys-142 is the Acyl-thioester intermediate of the active site. Residues Lys-163 and Ser-192 each coordinate substrate. His-235 serves as the catalytic Proton acceptor. Residue Glu-237 is part of the active site. Substrate is bound at residue Arg-249.

The protein belongs to the MetA family.

It localises to the cytoplasm. The enzyme catalyses L-homoserine + succinyl-CoA = O-succinyl-L-homoserine + CoA. Its pathway is amino-acid biosynthesis; L-methionine biosynthesis via de novo pathway; O-succinyl-L-homoserine from L-homoserine: step 1/1. In terms of biological role, transfers a succinyl group from succinyl-CoA to L-homoserine, forming succinyl-L-homoserine. The polypeptide is Homoserine O-succinyltransferase (Serratia proteamaculans (strain 568)).